A 1068-amino-acid polypeptide reads, in one-letter code: MLSSLGCLLLCGSITLALGNAQKLPKGKRPNLKVHINTTSDSILLKFLRPSPNVKLEGLLLGYGSNVSPNQYFPLPAEGKFTEAIVDAEPKYLIVVRPAPPPSQKKSCSGKTRSRKPLQLVVGTLTPSSVFLSWGFLINPHHDWTLPSHCPNDRFYTIRYREKDKEKKWIFQICPATETIVENLKPNTVYEFGVKDNVEGGIWSKIFNHKTVVGSKKVNGKIQSTYDQDHTVPAYVPRKLIPITIIKQVIQNVTHKDSAKSPEKAPLGGVILVHLIIPGLNETTVKLPASLMFEISDALKTQLAKNETLALPAESKTPEVEKISARPTTVTPETVPRSTKPTTSSALDVSETTLASSEKPWIVPTAKISEDSKVLQPQTATYDVFSSPTTSDEPEISDSYTATSDRILDSIPPKTSRTLEQPRATLAPSETPFVPQKLEIFTSPEMQPTTPAPQQTTSIPSTPKRRPRPKPPRTKPERTTSAGTITPKISKSPEPTWTTPAPGKTQFISLKPKIPLSPEVTHTKPAPKQTPRAPPKPKTSPRPRIPQTQPVPKVPQRVTAKPKTSPSPEVSYTTPAPKDVLLPHKPYPEVSQSEPAPLETRGIPFIPMISPSPSQEELQTTLEETDQSTQEPFTTKIPRTTELAKTTQAPHRFYTTVRPRTSDKPHIRPGVKQAPRPSGADRNVSVDSTHPTKKPGTRRPPLPPRPTHPRRKPLPPNNVTGKPGSAGIISSGPITTPPLRSTPRPTGTPLERIETDIKQPTVPASGEELENITDFSSSPTRETDPLGKPRFKGPHVRYIQKPDNSPCSITDSVKRFPKEEATEGNATSPPQNPPTNLTVVTVEGCPSFVILDWEKPLNDTVTEYEVISRENGSFSGKNKSIQMTNQTFSTVENLKPNTSYEFQVKPKNPLGEGPVSNTVAFSTESADPRVSEPVSAGRDAIWTERPFNSDSYSECKGKQYVKRTWYKKFVGVQLCNSLRYKIYLSDSLTGKFYNIGDQRGHGEDHCQFVDSFLDGRTGQQLTSDQLPIKEGYFRAVRQEPVQFGEIGGHTQINYVQWYECGTTIPGKW.

A signal peptide spans 1-21 (MLSSLGCLLLCGSITLALGNA). N-linked (GlcNAc...) asparagine glycosylation occurs at Asn37. The 99-residue stretch at 116 to 214 (KPLQLVVGTL…KIFNHKTVVG (99 aa)) folds into the Fibronectin type-III 1 domain. Disordered stretches follow at residues 315–351 (SKTP…DVSE) and 384–811 (VFSS…SITD). The segment covering 326–339 (RPTTVTPETVPRST) has biased composition (low complexity). The span at 340 to 351 (KPTTSSALDVSE) shows a compositional bias: polar residues. Residues 447–462 (QPTTPAPQQTTSIPST) show a composition bias toward low complexity. Over residues 463–473 (PKRRPRPKPPR) the composition is skewed to basic residues. A compositionally biased stretch (polar residues) spans 482 to 499 (AGTITPKISKSPEPTWTT). The span at 532–544 (RAPPKPKTSPRPR) shows a compositional bias: pro residues. Over residues 562–574 (PKTSPSPEVSYTT) the composition is skewed to polar residues. 2 stretches are compositionally biased toward low complexity: residues 603-631 (IPFI…STQE) and 737-750 (PPLR…GTPL). Positions 802 to 811 (PDNSPCSITD) are enriched in polar residues. The Fibronectin type-III 2 domain occupies 833 to 926 (PPTNLTVVTV…NTVAFSTESA (94 aa)).

As to quaternary structure, probably interacts with ABI3. As to expression, expressed in brain, heart, lung, liver, pancreas kidney and placenta.

The protein localises to the secreted. In Homo sapiens (Human), this protein is Target of Nesh-SH3.